A 264-amino-acid polypeptide reads, in one-letter code: Hemin import ATP-binding protein HmuV (264 aa).

The region spanning 2 to 241 (IEVSGLSVRL…ATMLSVFGCA (240 aa)) is the ABC transporter domain. Position 34–41 (34–41 (GPNGSGKT)) interacts with ATP.

This sequence belongs to the ABC transporter superfamily. Heme (hemin) importer (TC 3.A.1.14.5) family. In terms of assembly, the complex is composed of two ATP-binding proteins (HmuV), two transmembrane proteins (HmuU) and a solute-binding protein (HmuT).

It is found in the cell inner membrane. In terms of biological role, part of the ABC transporter complex HmuTUV involved in hemin import. Responsible for energy coupling to the transport system. The sequence is that of Hemin import ATP-binding protein HmuV from Rhizobium etli (strain ATCC 51251 / DSM 11541 / JCM 21823 / NBRC 15573 / CFN 42).